Reading from the N-terminus, the 276-residue chain is Homeobox protein TOS8 (276 aa).

Polar residues predominate over residues 176–185 (NSVRGSNNGY). Residues 176–199 (NSVRGSNNGYSAKEKKHKAHGKRS) are disordered. Basic residues predominate over residues 189–199 (EKKHKAHGKRS). Residues 194-256 (AHGKRSNLPK…NARRRKIFSG (63 aa)) constitute a DNA-binding region (homeobox; TALE-type).

Belongs to the TALE/CUP9 homeobox family.

It localises to the nucleus. In Saccharomyces cerevisiae (strain ATCC 204508 / S288c) (Baker's yeast), this protein is Homeobox protein TOS8 (TOS8).